We begin with the raw amino-acid sequence, 459 residues long: Bifunctional protein GlmU (459 aa).

The interval 1 to 229 is pyrophosphorylase; it reads MSNFAIILAA…FDESLGVNDR (229 aa). Residues 8–11, Lys22, Gln72, and 77–78 contribute to the UDP-N-acetyl-alpha-D-glucosamine site; these read LAAG and GT. Residue Asp102 coordinates Mg(2+). Gly139, Glu154, Asn169, and Asn227 together coordinate UDP-N-acetyl-alpha-D-glucosamine. Asn227 serves as a coordination point for Mg(2+). Residues 230-250 are linker; the sequence is VALATAESVMRRRINHKHMVN. The segment at 251-459 is N-acetyltransferase; sequence GVSFVNPEAT…TRLPHHPKNQ (209 aa). Residues Arg332 and Lys350 each contribute to the UDP-N-acetyl-alpha-D-glucosamine site. His362 serves as the catalytic Proton acceptor. Positions 365 and 376 each coordinate UDP-N-acetyl-alpha-D-glucosamine. Residues Ala379, 385 to 386, Ser404, Ala422, and Arg439 each bind acetyl-CoA; that span reads NY.

The protein in the N-terminal section; belongs to the N-acetylglucosamine-1-phosphate uridyltransferase family. It in the C-terminal section; belongs to the transferase hexapeptide repeat family. Homotrimer. Requires Mg(2+) as cofactor.

It localises to the cytoplasm. It carries out the reaction alpha-D-glucosamine 1-phosphate + acetyl-CoA = N-acetyl-alpha-D-glucosamine 1-phosphate + CoA + H(+). The enzyme catalyses N-acetyl-alpha-D-glucosamine 1-phosphate + UTP + H(+) = UDP-N-acetyl-alpha-D-glucosamine + diphosphate. It participates in nucleotide-sugar biosynthesis; UDP-N-acetyl-alpha-D-glucosamine biosynthesis; N-acetyl-alpha-D-glucosamine 1-phosphate from alpha-D-glucosamine 6-phosphate (route II): step 2/2. The protein operates within nucleotide-sugar biosynthesis; UDP-N-acetyl-alpha-D-glucosamine biosynthesis; UDP-N-acetyl-alpha-D-glucosamine from N-acetyl-alpha-D-glucosamine 1-phosphate: step 1/1. Its pathway is bacterial outer membrane biogenesis; LPS lipid A biosynthesis. Functionally, catalyzes the last two sequential reactions in the de novo biosynthetic pathway for UDP-N-acetylglucosamine (UDP-GlcNAc). The C-terminal domain catalyzes the transfer of acetyl group from acetyl coenzyme A to glucosamine-1-phosphate (GlcN-1-P) to produce N-acetylglucosamine-1-phosphate (GlcNAc-1-P), which is converted into UDP-GlcNAc by the transfer of uridine 5-monophosphate (from uridine 5-triphosphate), a reaction catalyzed by the N-terminal domain. The protein is Bifunctional protein GlmU of Streptococcus pneumoniae (strain 70585).